The primary structure comprises 512 residues: Multidrug resistance protein 3 (512 aa).

14 helical membrane-spanning segments follow: residues 13–33 (FVVL…TIVA), 48–68 (KFAW…PIYG), 79–99 (FFLF…IAQT), 109–129 (IQGI…FDLF), 139–159 (GMFG…GAII), 163–183 (ISWH…LFFI), 200–220 (WGGA…LELG), 228–248 (SIQI…FFIV), 272–292 (ILAF…PIFV), 304–324 (GFIL…GGIF), 333–353 (LMLI…NMTP), 358–378 (VWLT…FSLL), 399–421 (SFLR…TNVF), and 475–495 (ITYV…TILF).

It belongs to the major facilitator superfamily. EmrB family.

The protein localises to the cell membrane. Its function is as follows. Confers resistance to puromycin, tosufloxacin and norfloxacin. The polypeptide is Multidrug resistance protein 3 (bmr3) (Bacillus subtilis (strain 168)).